We begin with the raw amino-acid sequence, 48 residues long: Large ribosomal subunit protein bL34 (48 aa).

It belongs to the bacterial ribosomal protein bL34 family.

The polypeptide is Large ribosomal subunit protein bL34 (rpmH) (Mycoplasma pneumoniae (strain ATCC 29342 / M129 / Subtype 1) (Mycoplasmoides pneumoniae)).